The chain runs to 188 residues: Urease accessory protein UreE (188 aa).

Residues 142-174 (AYQSQAGAGHHHHHDHDHGHSHDHSHTHSHADS) are disordered. A compositionally biased stretch (basic and acidic residues) spans 157–172 (HDHGHSHDHSHTHSHA).

The protein belongs to the UreE family.

It is found in the cytoplasm. Functionally, involved in urease metallocenter assembly. Binds nickel. Probably functions as a nickel donor during metallocenter assembly. The sequence is that of Urease accessory protein UreE from Tolumonas auensis (strain DSM 9187 / NBRC 110442 / TA 4).